The chain runs to 373 residues: Cobalt-precorrin-5B C(1)-methyltransferase (373 aa).

The protein belongs to the CbiD family.

It carries out the reaction Co-precorrin-5B + S-adenosyl-L-methionine = Co-precorrin-6A + S-adenosyl-L-homocysteine. It participates in cofactor biosynthesis; adenosylcobalamin biosynthesis; cob(II)yrinate a,c-diamide from sirohydrochlorin (anaerobic route): step 6/10. Functionally, catalyzes the methylation of C-1 in cobalt-precorrin-5B to form cobalt-precorrin-6A. The polypeptide is Cobalt-precorrin-5B C(1)-methyltransferase (Polaromonas sp. (strain JS666 / ATCC BAA-500)).